Reading from the N-terminus, the 467-residue chain is Fumarate hydratase class II (467 aa).

Substrate is bound by residues 98-100 (SGT), Arg-126, 129-132 (HPND), 139-141 (SSN), and Thr-187. His-188 serves as the catalytic Proton donor/acceptor. Ser-318 is an active-site residue. Substrate contacts are provided by residues Ser-319 and 324–326 (KVN).

Belongs to the class-II fumarase/aspartase family. Fumarase subfamily. In terms of assembly, homotetramer.

The protein resides in the cytoplasm. The catalysed reaction is (S)-malate = fumarate + H2O. The protein operates within carbohydrate metabolism; tricarboxylic acid cycle; (S)-malate from fumarate: step 1/1. Inhibited by ATP, citrate and S-2,3-dicarboxyaziridine. Functionally, involved in the TCA cycle. FumC seems to be a backup enzyme for FumA under conditions of iron limitation and oxidative stress. Catalyzes the stereospecific interconversion of fumarate to L-malate. The chain is Fumarate hydratase class II from Escherichia coli (strain K12).